The sequence spans 324 residues: S-methyl-5'-thioadenosine phosphorylase (324 aa).

Phosphate-binding positions include S14, 57–58 (RH), and 90–91 (SA). A substrate-binding site is contributed by M196. Residue S197 participates in phosphate binding. 220–222 (DYD) is a binding site for substrate.

This sequence belongs to the PNP/MTAP phosphorylase family. MTAP subfamily. Homotrimer.

The protein resides in the cytoplasm. It is found in the nucleus. The enzyme catalyses S-methyl-5'-thioadenosine + phosphate = 5-(methylsulfanyl)-alpha-D-ribose 1-phosphate + adenine. It functions in the pathway amino-acid biosynthesis; L-methionine biosynthesis via salvage pathway; S-methyl-5-thio-alpha-D-ribose 1-phosphate from S-methyl-5'-thioadenosine (phosphorylase route): step 1/1. Catalyzes the reversible phosphorylation of S-methyl-5'-thioadenosine (MTA) to adenine and 5-methylthioribose-1-phosphate. Involved in the breakdown of MTA, a major by-product of polyamine biosynthesis. Responsible for the first step in the methionine salvage pathway after MTA has been generated from S-adenosylmethionine. Has broad substrate specificity with 6-aminopurine nucleosides as preferred substrates. This is S-methyl-5'-thioadenosine phosphorylase from Coprinopsis cinerea (strain Okayama-7 / 130 / ATCC MYA-4618 / FGSC 9003) (Inky cap fungus).